A 787-amino-acid chain; its full sequence is LPS-assembly protein LptD (787 aa).

The N-terminal stretch at 1–39 (MPRKTLLPLVPACDAAPRRKRLAAALLAVPGLVPAVSQA) is a signal peptide.

The protein belongs to the LptD family. As to quaternary structure, component of the lipopolysaccharide transport and assembly complex. Interacts with LptE and LptA.

It is found in the cell outer membrane. Its function is as follows. Together with LptE, is involved in the assembly of lipopolysaccharide (LPS) at the surface of the outer membrane. This Burkholderia thailandensis (strain ATCC 700388 / DSM 13276 / CCUG 48851 / CIP 106301 / E264) protein is LPS-assembly protein LptD.